A 544-amino-acid polypeptide reads, in one-letter code: Chaperonin GroEL (544 aa).

ATP-binding positions include 29 to 32 (TIGP), 86 to 90 (DGTTT), Gly413, 478 to 480 (NAA), and Asp494.

This sequence belongs to the chaperonin (HSP60) family. Forms a cylinder of 14 subunits composed of two heptameric rings stacked back-to-back. Interacts with the co-chaperonin GroES.

It is found in the cytoplasm. The catalysed reaction is ATP + H2O + a folded polypeptide = ADP + phosphate + an unfolded polypeptide.. Functionally, together with its co-chaperonin GroES, plays an essential role in assisting protein folding. The GroEL-GroES system forms a nano-cage that allows encapsulation of the non-native substrate proteins and provides a physical environment optimized to promote and accelerate protein folding. This chain is Chaperonin GroEL, found in Exiguobacterium sp. (strain ATCC BAA-1283 / AT1b).